The primary structure comprises 237 residues: Ribonuclease PH (237 aa).

Residues arginine 86 and 124–126 (GTR) contribute to the phosphate site.

This sequence belongs to the RNase PH family. As to quaternary structure, homohexameric ring arranged as a trimer of dimers.

The enzyme catalyses tRNA(n+1) + phosphate = tRNA(n) + a ribonucleoside 5'-diphosphate. Its function is as follows. Phosphorolytic 3'-5' exoribonuclease that plays an important role in tRNA 3'-end maturation. Removes nucleotide residues following the 3'-CCA terminus of tRNAs; can also add nucleotides to the ends of RNA molecules by using nucleoside diphosphates as substrates, but this may not be physiologically important. Probably plays a role in initiation of 16S rRNA degradation (leading to ribosome degradation) during starvation. The protein is Ribonuclease PH of Methylorubrum populi (strain ATCC BAA-705 / NCIMB 13946 / BJ001) (Methylobacterium populi).